Reading from the N-terminus, the 130-residue chain is Small ribosomal subunit protein uS11 (130 aa).

It belongs to the universal ribosomal protein uS11 family. Part of the 30S ribosomal subunit. Interacts with proteins S7 and S18. Binds to IF-3.

Its function is as follows. Located on the platform of the 30S subunit, it bridges several disparate RNA helices of the 16S rRNA. Forms part of the Shine-Dalgarno cleft in the 70S ribosome. The protein is Small ribosomal subunit protein uS11 of Shewanella denitrificans (strain OS217 / ATCC BAA-1090 / DSM 15013).